Here is a 116-residue protein sequence, read N- to C-terminus: Protein Wnt-5(III) (116 aa).

The O-palmitoleoyl serine; by PORCN moiety is linked to residue S1. A glycan (N-linked (GlcNAc...) asparagine) is linked at N69. C82 and C97 are oxidised to a cystine.

This sequence belongs to the Wnt family. Palmitoleoylation is required for efficient binding to frizzled receptors. Depalmitoleoylation leads to Wnt signaling pathway inhibition.

It is found in the secreted. The protein resides in the extracellular space. The protein localises to the extracellular matrix. Its function is as follows. Ligand for members of the frizzled family of seven transmembrane receptors. Probable developmental protein. May be a signaling molecule which affects the development of discrete regions of tissues. Is likely to signal over only few cell diameters. This Eptatretus stoutii (Pacific hagfish) protein is Protein Wnt-5(III) (WNT-5(III)).